Here is a 322-residue protein sequence, read N- to C-terminus: MSCLDVMYQVYGPPQPYFAAAYTPYHQKLAYYSKMQEAQECASPGSSASGSSSFSNPTPASVKEEEGSPEKERPPEAEYINSRCVLFTYFQGDISSVVDEHFSRALSHPSSYTPSCTSSKAHRSSGPWRAEGTFPMSQRSFPASFWNSAYQAPVPAPLGSPLAAAHSELPFATDPYSPATLHGHLHQGAADWHHAHPHHAHPHHPYALGGALGAQASAYPRPAVHEVYAPHFDPRYGPLLMPAATGRPGRLAPASAPAPGSPPCELAAKGEPAGSAWAAPGGPFVSPTGDVAQSLGLSVDSGKRRRECSLPSAPPALYPTLG.

Residues 42–61 (ASPGSSASGSSSFSNPTPAS) are compositionally biased toward low complexity. Disordered regions lie at residues 42–75 (ASPGSSASGSSSFSNPTPASVKEEEGSPEKERPP) and 248–322 (PGRL…PTLG). Over residues 62–75 (VKEEEGSPEKERPP) the composition is skewed to basic and acidic residues. Low complexity-rich tracts occupy residues 248–258 (PGRLAPASAPA) and 270–283 (GEPAGSAWAAPGGP). Residues 312 to 322 (SAPPALYPTLG) show a composition bias toward pro residues.

The protein belongs to the vestigial family. As to quaternary structure, interacts with TEFs. Binds to TEAD1/TEF1. In terms of tissue distribution, skeletal muscle specific.

It localises to the nucleus. Its function is as follows. May act as a specific coactivator for the mammalian TEFs. May play a role in the development of skeletal muscles. The protein is Transcription cofactor vestigial-like protein 2 (Vgll2) of Mus musculus (Mouse).